The following is a 482-amino-acid chain: Dual specificity protein phosphatase 10 (482 aa).

The 118-residue stretch at 168-285 (PSQGPVIIDC…FKQNHENLCD (118 aa)) folds into the Rhodanese domain. Residues 199–215 (KISRRRLQQGKITVLDL) are interaction with MAP kinases. Residues 321–464 (ELTPILPFLF…LLEFEEDLNN (144 aa)) enclose the Tyrosine-protein phosphatase domain. Cys408 acts as the Phosphocysteine intermediate in catalysis.

Belongs to the protein-tyrosine phosphatase family. Non-receptor class dual specificity subfamily. As to quaternary structure, monomer. Interacts with MAPK14. In terms of tissue distribution, expressed in keratinocytes (at protein level). Detected in brain.

It is found in the cytoplasm. It localises to the nucleus. The enzyme catalyses O-phospho-L-tyrosyl-[protein] + H2O = L-tyrosyl-[protein] + phosphate. It catalyses the reaction O-phospho-L-seryl-[protein] + H2O = L-seryl-[protein] + phosphate. It carries out the reaction O-phospho-L-threonyl-[protein] + H2O = L-threonyl-[protein] + phosphate. Protein phosphatase involved in the inactivation of MAP kinases. Has a specificity for the MAPK11/MAPK12/MAPK13/MAPK14 subfamily. It preferably dephosphorylates p38. The polypeptide is Dual specificity protein phosphatase 10 (DUSP10) (Homo sapiens (Human)).